The following is a 147-amino-acid chain: Large ribosomal subunit protein uL13 (147 aa).

It belongs to the universal ribosomal protein uL13 family. Part of the 50S ribosomal subunit.

Its function is as follows. This protein is one of the early assembly proteins of the 50S ribosomal subunit, although it is not seen to bind rRNA by itself. It is important during the early stages of 50S assembly. The sequence is that of Large ribosomal subunit protein uL13 from Mycolicibacterium paratuberculosis (strain ATCC BAA-968 / K-10) (Mycobacterium paratuberculosis).